A 354-amino-acid polypeptide reads, in one-letter code: Uroporphyrinogen decarboxylase (354 aa).

Substrate contacts are provided by residues 27–31 (RQAGR), D77, Y154, S209, and H327.

Belongs to the uroporphyrinogen decarboxylase family. In terms of assembly, homodimer.

Its subcellular location is the cytoplasm. It catalyses the reaction uroporphyrinogen III + 4 H(+) = coproporphyrinogen III + 4 CO2. It participates in porphyrin-containing compound metabolism; protoporphyrin-IX biosynthesis; coproporphyrinogen-III from 5-aminolevulinate: step 4/4. Its function is as follows. Catalyzes the decarboxylation of four acetate groups of uroporphyrinogen-III to yield coproporphyrinogen-III. The polypeptide is Uroporphyrinogen decarboxylase (Methylobacillus flagellatus (strain ATCC 51484 / DSM 6875 / VKM B-1610 / KT)).